The following is a 495-amino-acid chain: Zinc finger and SCAN domain-containing protein 5B (495 aa).

The tract at residues 1 to 40 (MAANWTLSWGQGGPCNSPGSDTPRSVASPETQLGNHDRNP) is disordered. Residues 17 to 34 (SPGSDTPRSVASPETQLG) show a composition bias toward polar residues. The 83-residue stretch at 44-126 (HMNFRMFSCP…DLLRNNRRPK (83 aa)) folds into the SCAN box domain. 2 disordered regions span residues 150–183 (APAS…RREQ) and 227–347 (ENRE…PDGQ). The segment covering 161-173 (VSSQWASSVNQMH) has biased composition (polar residues). A compositionally biased stretch (basic and acidic residues) spans 250-262 (RAKEGKEPQKRAS). Residues 292–310 (NLSSPKRSKPDASSISQEE) show a composition bias toward polar residues. C2H2-type zinc fingers lie at residues 355–377 (FACD…RRSH), 383–405 (FQCD…QRVH), 411–433 (YMCD…KRIH), 439–461 (FKCK…QRTH), and 467–489 (YKCP…LKTH).

It is found in the nucleus. May be involved in transcriptional regulation. The polypeptide is Zinc finger and SCAN domain-containing protein 5B (ZSCAN5B) (Homo sapiens (Human)).